The primary structure comprises 485 residues: Glutamate--tRNA ligase (485 aa).

Residues proline 12–asparagine 22 carry the 'HIGH' region motif. The Zn(2+) site is built by cysteine 109, cysteine 111, cysteine 136, and histidine 138. Positions lysine 253–arginine 257 match the 'KMSKS' region motif. Lysine 256 is a binding site for ATP.

Belongs to the class-I aminoacyl-tRNA synthetase family. Glutamate--tRNA ligase type 1 subfamily. As to quaternary structure, monomer. Zn(2+) serves as cofactor.

The protein resides in the cytoplasm. It catalyses the reaction tRNA(Glu) + L-glutamate + ATP = L-glutamyl-tRNA(Glu) + AMP + diphosphate. Functionally, catalyzes the attachment of glutamate to tRNA(Glu) in a two-step reaction: glutamate is first activated by ATP to form Glu-AMP and then transferred to the acceptor end of tRNA(Glu). The protein is Glutamate--tRNA ligase of Clostridium botulinum (strain Eklund 17B / Type B).